The primary structure comprises 469 residues: Glutamate--tRNA ligase (469 aa).

A 'HIGH' region motif is present at residues 9–19; that stretch reads PSPTGFLHVGG. Zn(2+) is bound by residues C98, C100, C125, and D127. The 'KMSKS' region motif lies at 236–240; it reads KLSKR. K239 lines the ATP pocket.

The protein belongs to the class-I aminoacyl-tRNA synthetase family. Glutamate--tRNA ligase type 1 subfamily. Monomer. It depends on Zn(2+) as a cofactor.

It is found in the cytoplasm. The catalysed reaction is tRNA(Glu) + L-glutamate + ATP = L-glutamyl-tRNA(Glu) + AMP + diphosphate. In terms of biological role, catalyzes the attachment of glutamate to tRNA(Glu) in a two-step reaction: glutamate is first activated by ATP to form Glu-AMP and then transferred to the acceptor end of tRNA(Glu). The sequence is that of Glutamate--tRNA ligase from Shewanella sp. (strain MR-4).